The sequence spans 398 residues: Chorismate synthase (398 aa).

Positions 44 and 50 each coordinate NADP(+). FMN is bound by residues 133-135 (RAS), 261-262 (QA), G306, 321-325 (KPIPT), and R347.

The protein belongs to the chorismate synthase family. Homotetramer. The cofactor is FMNH2.

The catalysed reaction is 5-O-(1-carboxyvinyl)-3-phosphoshikimate = chorismate + phosphate. It participates in metabolic intermediate biosynthesis; chorismate biosynthesis; chorismate from D-erythrose 4-phosphate and phosphoenolpyruvate: step 7/7. Catalyzes the anti-1,4-elimination of the C-3 phosphate and the C-6 proR hydrogen from 5-enolpyruvylshikimate-3-phosphate (EPSP) to yield chorismate, which is the branch point compound that serves as the starting substrate for the three terminal pathways of aromatic amino acid biosynthesis. This reaction introduces a second double bond into the aromatic ring system. This is Chorismate synthase from Aquifex aeolicus (strain VF5).